The sequence spans 632 residues: tRNA uridine 5-carboxymethylaminomethyl modification enzyme MnmG (632 aa).

Residues 13-18, Val-125, and Ser-180 each bind FAD; that span reads GGGHAG. Residue 273 to 287 coordinates NAD(+); that stretch reads GPRYCPSIEDKVMRF. An FAD-binding site is contributed by Gln-370.

This sequence belongs to the MnmG family. In terms of assembly, homodimer. Heterotetramer of two MnmE and two MnmG subunits. FAD is required as a cofactor.

The protein resides in the cytoplasm. In terms of biological role, NAD-binding protein involved in the addition of a carboxymethylaminomethyl (cmnm) group at the wobble position (U34) of certain tRNAs, forming tRNA-cmnm(5)s(2)U34. The sequence is that of tRNA uridine 5-carboxymethylaminomethyl modification enzyme MnmG from Proteus mirabilis (strain HI4320).